Consider the following 278-residue polypeptide: Protein Rv2133c (278 aa).

This is Protein Rv2133c from Mycobacterium tuberculosis (strain ATCC 25618 / H37Rv).